Here is a 178-residue protein sequence, read N- to C-terminus: Large ribosomal subunit protein uL13m (178 aa).

S2 bears the N-acetylserine mark.

It belongs to the universal ribosomal protein uL13 family. Component of the mitochondrial large ribosomal subunit (mt-LSU). Mature mammalian 55S mitochondrial ribosomes consist of a small (28S) and a large (39S) subunit. The 28S small subunit contains a 12S ribosomal RNA (12S mt-rRNA) and 30 different proteins. The 39S large subunit contains a 16S rRNA (16S mt-rRNA), a copy of mitochondrial valine transfer RNA (mt-tRNA(Val)), which plays an integral structural role, and 52 different proteins. Interacts with OXA1L.

It localises to the mitochondrion. The chain is Large ribosomal subunit protein uL13m (MRPL13) from Homo sapiens (Human).